The primary structure comprises 345 residues: Protein RecA (345 aa).

67–74 (GPESSGKT) contacts ATP.

It belongs to the RecA family.

The protein resides in the cytoplasm. Can catalyze the hydrolysis of ATP in the presence of single-stranded DNA, the ATP-dependent uptake of single-stranded DNA by duplex DNA, and the ATP-dependent hybridization of homologous single-stranded DNAs. It interacts with LexA causing its activation and leading to its autocatalytic cleavage. The chain is Protein RecA from Acidothermus cellulolyticus (strain ATCC 43068 / DSM 8971 / 11B).